The chain runs to 382 residues: Queuine tRNA-ribosyltransferase (382 aa).

Residue Asp93 is the Proton acceptor of the active site. Substrate-binding positions include 93–97 (DSGGF), Asp147, Gln191, and Gly218. Residues 249 to 255 (GVGKPED) are RNA binding. The active-site Nucleophile is the Asp268. The interval 273 to 277 (TRNAR) is RNA binding; important for wobble base 34 recognition. Positions 306, 308, 311, and 337 each coordinate Zn(2+).

Belongs to the queuine tRNA-ribosyltransferase family. As to quaternary structure, homodimer. Within each dimer, one monomer is responsible for RNA recognition and catalysis, while the other monomer binds to the replacement base PreQ1. Zn(2+) serves as cofactor.

It carries out the reaction 7-aminomethyl-7-carbaguanine + guanosine(34) in tRNA = 7-aminomethyl-7-carbaguanosine(34) in tRNA + guanine. The protein operates within tRNA modification; tRNA-queuosine biosynthesis. Its function is as follows. Catalyzes the base-exchange of a guanine (G) residue with the queuine precursor 7-aminomethyl-7-deazaguanine (PreQ1) at position 34 (anticodon wobble position) in tRNAs with GU(N) anticodons (tRNA-Asp, -Asn, -His and -Tyr). Catalysis occurs through a double-displacement mechanism. The nucleophile active site attacks the C1' of nucleotide 34 to detach the guanine base from the RNA, forming a covalent enzyme-RNA intermediate. The proton acceptor active site deprotonates the incoming PreQ1, allowing a nucleophilic attack on the C1' of the ribose to form the product. After dissociation, two additional enzymatic reactions on the tRNA convert PreQ1 to queuine (Q), resulting in the hypermodified nucleoside queuosine (7-(((4,5-cis-dihydroxy-2-cyclopenten-1-yl)amino)methyl)-7-deazaguanosine). This Haemophilus influenzae (strain PittEE) protein is Queuine tRNA-ribosyltransferase.